A 135-amino-acid polypeptide reads, in one-letter code: Large ribosomal subunit protein bL19 (135 aa).

It belongs to the bacterial ribosomal protein bL19 family.

Its function is as follows. This protein is located at the 30S-50S ribosomal subunit interface and may play a role in the structure and function of the aminoacyl-tRNA binding site. The sequence is that of Large ribosomal subunit protein bL19 from Xanthomonas euvesicatoria pv. vesicatoria (strain 85-10) (Xanthomonas campestris pv. vesicatoria).